A 95-amino-acid chain; its full sequence is Integration host factor subunit beta (95 aa).

This sequence belongs to the bacterial histone-like protein family. As to quaternary structure, heterodimer of an alpha and a beta chain.

Its function is as follows. This protein is one of the two subunits of integration host factor, a specific DNA-binding protein that functions in genetic recombination as well as in transcriptional and translational control. Involved in hydrogenase gene expression. In Rhodobacter capsulatus (Rhodopseudomonas capsulata), this protein is Integration host factor subunit beta (ihfB).